The primary structure comprises 323 residues: Aspartate carbamoyltransferase catalytic subunit (323 aa).

Residues R65 and T66 each contribute to the carbamoyl phosphate site. K93 contributes to the L-aspartate binding site. Carbamoyl phosphate is bound by residues R115, H149, and Q152. L-aspartate-binding residues include R182 and R237. Carbamoyl phosphate is bound by residues G278 and P279.

The protein belongs to the aspartate/ornithine carbamoyltransferase superfamily. ATCase family. As to quaternary structure, heterododecamer (2C3:3R2) of six catalytic PyrB chains organized as two trimers (C3), and six regulatory PyrI chains organized as three dimers (R2).

It catalyses the reaction carbamoyl phosphate + L-aspartate = N-carbamoyl-L-aspartate + phosphate + H(+). It participates in pyrimidine metabolism; UMP biosynthesis via de novo pathway; (S)-dihydroorotate from bicarbonate: step 2/3. In terms of biological role, catalyzes the condensation of carbamoyl phosphate and aspartate to form carbamoyl aspartate and inorganic phosphate, the committed step in the de novo pyrimidine nucleotide biosynthesis pathway. The polypeptide is Aspartate carbamoyltransferase catalytic subunit (Aromatoleum aromaticum (strain DSM 19018 / LMG 30748 / EbN1) (Azoarcus sp. (strain EbN1))).